The following is a 682-amino-acid chain: Actin-binding LIM protein 3 (682 aa).

Met1 is subject to N-acetylmethionine. LIM zinc-binding domains are found at residues 21-80 (IQCY…LYGT), 80-140 (TRCD…MTSS), 149-208 (SHCA…QFGI), and 208-268 (IKCE…ARAE). Phosphoserine occurs at positions 277, 280, 282, 286, 290, 337, 372, and 373. Disordered stretches follow at residues 372 to 426 (SSPG…SYQA) and 440 to 475 (YRKP…PAYS). Tyr376 bears the Phosphotyrosine mark. Residues Ser379 and Ser388 each carry the phosphoserine modification. Polar residues-rich tracts occupy residues 380–393 (PTYS…TFSR), 405–425 (GRSS…TSYQ), and 453–466 (STAT…DISQ). Phosphoserine is present on residues Ser492, Ser502, and Ser503. At Thr542 the chain carries Phosphothreonine. Residues Ser566, Ser575, and Ser606 each carry the phosphoserine modification. Residues 614–682 (MREYKIYPYE…NELKKQARLF (69 aa)) form the HP domain. Arg630 carries the post-translational modification Omega-N-methylarginine.

As to quaternary structure, directly interacts with F-actin and ABRA. Expressed in heart, brain, lung and liver. In the brain, highly expressed in the olfactory bulb. In the hippocampus, expressed selectively in the CA2 and CA3 fields. In the cerebellum, expressed in internal granular cells.

It localises to the cytoplasm. Its function is as follows. May act as scaffold protein. May stimulate ABRA activity and ABRA-dependent SRF transcriptional activity. The polypeptide is Actin-binding LIM protein 3 (Ablim3) (Mus musculus (Mouse)).